The sequence spans 517 residues: Protein disulfide-isomerase A5 (517 aa).

The N-terminal stretch at 1-21 (MARAWGLLLAIGVILPTWLSS) is a signal peptide. 4 cysteine pairs are disulfide-bonded: cysteine 83–cysteine 92, cysteine 180–cysteine 183, cysteine 303–cysteine 306, and cysteine 424–cysteine 427. 3 Thioredoxin domains span residues 132–259 (FLKD…NPQP), 268–382 (PWAD…NPEA), and 376–504 (WMQN…TLRE). Residues 514–517 (REDL) carry the Prevents secretion from ER motif.

It belongs to the protein disulfide isomerase family.

Its subcellular location is the endoplasmic reticulum lumen. The catalysed reaction is Catalyzes the rearrangement of -S-S- bonds in proteins.. This Rattus norvegicus (Rat) protein is Protein disulfide-isomerase A5 (Pdia5).